The primary structure comprises 406 residues: MSQPITRENFNEWMIPVYAPAPFIPVRGEGSRLWDQQGKEYIDFAGGIAVNALGHAHPELREALNEQASKFWHTGNGYTNEPVLRLAKKLIDATFADRVFFCNSGAEANEAALKLARKFAHDRYGSHKSGIVAFKNAFHGRTLFTVSAGGQPAYSQDFAPLPPDIRHAAYNDINSASALIDDATCAVIVEPIQGEGGVVPASNAFLQDLRELCDRHNALLIFDEVQTGVGRTGELYAYMHYGVTPDLLTTAKALGGGFPVGALLATEECARVMTVGTHGTTYGGNPLASAVAGKVLELINTPEMLNGVKQRHDWFVERLNTLNHRYGLFSEVRGLGLLIGCVLNADYAGQAKQISQEAAKAGVMVLIAGGNVVRFAPALNVSEEEVTTGLDRFAAACEHFVSRGSS.

The residue at position 252 (Lys252) is an N6-(pyridoxal phosphate)lysine.

This sequence belongs to the class-III pyridoxal-phosphate-dependent aminotransferase family. AstC subfamily. Pyridoxal 5'-phosphate is required as a cofactor.

The enzyme catalyses N(2)-succinyl-L-ornithine + 2-oxoglutarate = N-succinyl-L-glutamate 5-semialdehyde + L-glutamate. It participates in amino-acid degradation; L-arginine degradation via AST pathway; L-glutamate and succinate from L-arginine: step 3/5. Catalyzes the transamination of N(2)-succinylornithine and alpha-ketoglutarate into N(2)-succinylglutamate semialdehyde and glutamate. Can also act as an acetylornithine aminotransferase. The protein is Succinylornithine transaminase of Escherichia coli (strain 55989 / EAEC).